Reading from the N-terminus, the 96-residue chain is Cytochrome c-553 (96 aa).

The signal sequence occupies residues 1–19; sequence MKKVIVALGVLAFANVLMA. Residues Cys29, Cys32, His33, and Met73 each contribute to the heme c site.

It belongs to the cytochrome c family. In terms of processing, binds 1 heme c group covalently per subunit.

Its subcellular location is the periplasm. Natural electron acceptor for a formate dehydrogenase. The protein is Cytochrome c-553 of Helicobacter pylori (strain J99 / ATCC 700824) (Campylobacter pylori J99).